The sequence spans 270 residues: Tryptophan synthase alpha chain (270 aa).

Catalysis depends on proton acceptor residues Glu-51 and Asp-62.

The protein belongs to the TrpA family. Tetramer of two alpha and two beta chains.

It carries out the reaction (1S,2R)-1-C-(indol-3-yl)glycerol 3-phosphate + L-serine = D-glyceraldehyde 3-phosphate + L-tryptophan + H2O. Its pathway is amino-acid biosynthesis; L-tryptophan biosynthesis; L-tryptophan from chorismate: step 5/5. The alpha subunit is responsible for the aldol cleavage of indoleglycerol phosphate to indole and glyceraldehyde 3-phosphate. The polypeptide is Tryptophan synthase alpha chain (Methanothermobacter thermautotrophicus (strain ATCC 29096 / DSM 1053 / JCM 10044 / NBRC 100330 / Delta H) (Methanobacterium thermoautotrophicum)).